The following is a 108-amino-acid chain: UPF0060 membrane protein DSY4157 (108 aa).

The next 4 helical transmembrane spans lie at 6–26, 31–51, 60–80, and 86–106; these read ILFI…WLWL, PYWY…IPTL, VYAA…WGVD, and TYDW…LWAP.

It belongs to the UPF0060 family.

It is found in the cell membrane. The polypeptide is UPF0060 membrane protein DSY4157 (Desulfitobacterium hafniense (strain Y51)).